A 411-amino-acid chain; its full sequence is Secretion apparatus protein BsaZ (411 aa).

4 consecutive transmembrane segments (helical) span residues Ile-28–Thr-48, Ile-80–Ser-100, Ala-137–Ala-157, and Ile-175–Leu-195. The interval Ala-341 to Ala-411 is disordered. Residues Asp-370–Ala-404 show a composition bias toward low complexity.

Belongs to the type III secretion exporter family.

Its subcellular location is the cell membrane. In terms of biological role, part of the bsa type III secretion system, is involved in the intracellular replication of invading bacteria inside the host cell. Probably necessary for the lysis of the vacuole membrane and escape into the host cell cytoplasm. This is Secretion apparatus protein BsaZ (bsaZ) from Burkholderia mallei (strain NCTC 10247).